The chain runs to 461 residues: Cytochrome c biogenesis protein CcsB (461 aa).

3 consecutive transmembrane segments (helical) span residues 32–52 (LRLA…GTVI), 91–111 (TWWF…CTFT), and 178–198 (IGPI…IWGA).

Belongs to the Ccs1/CcsB family. In terms of assembly, may interact with CcsA.

The protein localises to the cellular thylakoid membrane. Functionally, required during biogenesis of c-type cytochromes (cytochrome c6 and cytochrome f) at the step of heme attachment. The polypeptide is Cytochrome c biogenesis protein CcsB (Trichormus variabilis (strain ATCC 29413 / PCC 7937) (Anabaena variabilis)).